Here is a 116-residue protein sequence, read N- to C-terminus: Ribosome-binding factor A (116 aa).

It belongs to the RbfA family. Monomer. Binds 30S ribosomal subunits, but not 50S ribosomal subunits or 70S ribosomes.

It localises to the cytoplasm. Its function is as follows. One of several proteins that assist in the late maturation steps of the functional core of the 30S ribosomal subunit. Associates with free 30S ribosomal subunits (but not with 30S subunits that are part of 70S ribosomes or polysomes). Required for efficient processing of 16S rRNA. May interact with the 5'-terminal helix region of 16S rRNA. In Streptococcus pneumoniae serotype 4 (strain ATCC BAA-334 / TIGR4), this protein is Ribosome-binding factor A.